The chain runs to 274 residues: Transmembrane protein 106B (274 aa).

Over residues 1-11 (MGKSLSHLPLH) the composition is skewed to low complexity. A disordered region spans residues 1–20 (MGKSLSHLPLHSSKEDAYDG). Gly-2 is lipidated: N-myristoyl glycine. Residues 2–96 (GKSLSHLPLH…QRLRPRRTKL (95 aa)) lie on the Cytoplasmic side of the membrane. The residue at position 33 (Ser-33) is a Phosphoserine. Residues 97–117 (YVMASVFVCLLLSGLAVFFLF) form a helical membrane-spanning segment. Residues 118 to 274 (PRSIDVKYIG…EYLNVLQPQQ (157 aa)) lie on the Lumenal side of the membrane. Asn-145, Asn-151, Asn-164, and Asn-183 each carry an N-linked (GlcNAc...) asparagine glycan. Residues Cys-214 and Cys-253 are joined by a disulfide bond. Asn-256 carries N-linked (GlcNAc...) asparagine glycosylation.

This sequence belongs to the TMEM106 family. Can form homomers. Interacts (via N-terminus) with MAP6 (via C-terminus). Interacts (via C-terminus) with the vacuolar-type ATPase subunit ATP6AP1. Interacts (via N-terminus) with AP2M1 and CLTC. Interacts with TMEM106C. In terms of assembly, (Microbial infection) Interacts with SARS coronavirus-2/SARS-CoV-2 spike protein (via RBD domain). In terms of tissue distribution, expressed in the brain, including in the frontal cortex (at protein level). Expressed in lung epithelial cells.

It localises to the late endosome membrane. Its subcellular location is the lysosome membrane. The protein localises to the cell membrane. In neurons, involved in the transport of late endosomes/lysosomes. May be involved in dendrite morphogenesis and maintenance by regulating lysosomal trafficking. May act as a molecular brake for retrograde transport of late endosomes/lysosomes, possibly via its interaction with MAP6. In motoneurons, may mediate the axonal transport of lysosomes and axonal sorting at the initial segment. It remains unclear whether TMEM106B affects the transport of moving lysosomes in the anterograde or retrograde direction in neurites and whether it is important in the sorting of lysosomes in axons or in dendrites. In neurons, may also play a role in the regulation of lysosomal size and responsiveness to stress. Required for proper lysosomal acidification. Functionally, (Microbial infection) Plays a role in human coronavirus SARS-CoV-2 infection, but not in common cold coronaviruses HCoV-229E and HCoV-OC43 infections. Involved in ACE2-independent SARS-CoV-2 cell entry. Required for post-endocytic stage of virus entry, facilitates spike-mediated membrane fusion. Virus attachment and endocytosis can also be mediated by other cell surface receptors. The protein is Transmembrane protein 106B of Homo sapiens (Human).